A 404-amino-acid chain; its full sequence is Cytoplasmic tRNA 2-thiolation protein 2 (404 aa).

It belongs to the CTU2/NCS2 family.

Its subcellular location is the cytoplasm. Its pathway is tRNA modification; 5-methoxycarbonylmethyl-2-thiouridine-tRNA biosynthesis. In terms of biological role, plays a central role in 2-thiolation of mcm(5)S(2)U at tRNA wobble positions of tRNA(Lys), tRNA(Glu) and tRNA(Gln). May act by forming a heterodimer with NCS6/CTU1 that ligates sulfur from thiocarboxylated URM1 onto the uridine of tRNAs at wobble position. This chain is Cytoplasmic tRNA 2-thiolation protein 2, found in Drosophila mojavensis (Fruit fly).